The following is a 1378-amino-acid chain: DNA-directed RNA polymerase subunit beta (1378 aa).

This sequence belongs to the RNA polymerase beta chain family. In terms of assembly, the RNAP catalytic core consists of 2 alpha, 1 beta, 1 beta' and 1 omega subunit. When a sigma factor is associated with the core the holoenzyme is formed, which can initiate transcription.

The catalysed reaction is RNA(n) + a ribonucleoside 5'-triphosphate = RNA(n+1) + diphosphate. Its function is as follows. DNA-dependent RNA polymerase catalyzes the transcription of DNA into RNA using the four ribonucleoside triphosphates as substrates. This chain is DNA-directed RNA polymerase subunit beta, found in Agrobacterium fabrum (strain C58 / ATCC 33970) (Agrobacterium tumefaciens (strain C58)).